The sequence spans 264 residues: Potassium channel regulatory protein (264 aa).

Residues 5–74 (DLVTLNVGGR…LRNHELLLPS (70 aa)) form the BTB domain.

As to quaternary structure, can form homooligomers. Interacts with KCNA1 (via cytoplasmic N-terminal domain) and KCNA4.

Its subcellular location is the endoplasmic reticulum. Inhibits potassium fluxes in cells. May regulate Kv1 family channel proteins by retaining a fraction of channels in endomembranes. This is Potassium channel regulatory protein (Kcnrg) from Mus musculus (Mouse).